The following is a 235-amino-acid chain: Ribonuclease PH (235 aa).

Phosphate is bound by residues arginine 86 and 124–126 (GTR).

It belongs to the RNase PH family. As to quaternary structure, homohexameric ring arranged as a trimer of dimers.

It catalyses the reaction tRNA(n+1) + phosphate = tRNA(n) + a ribonucleoside 5'-diphosphate. Functionally, phosphorolytic 3'-5' exoribonuclease that plays an important role in tRNA 3'-end maturation. Removes nucleotide residues following the 3'-CCA terminus of tRNAs; can also add nucleotides to the ends of RNA molecules by using nucleoside diphosphates as substrates, but this may not be physiologically important. Probably plays a role in initiation of 16S rRNA degradation (leading to ribosome degradation) during starvation. The sequence is that of Ribonuclease PH from Francisella tularensis subsp. holarctica (strain FTNF002-00 / FTA).